We begin with the raw amino-acid sequence, 488 residues long: Germacrene A hydroxylase (488 aa).

Topologically, residues Met-1–Thr-6 are cytoplasmic. The chain crosses the membrane as a helical; Signal-anchor for type II membrane protein span at residues Thr-7–Thr-23. At Arg-24–Phe-488 the chain is on the lumenal side. 3 N-linked (GlcNAc...) asparagine glycosylation sites follow: Asn-169, Asn-260, and Asn-379. Cys-432 contacts heme.

Belongs to the cytochrome P450 family. Heme serves as cofactor.

Its subcellular location is the endoplasmic reticulum membrane. The enzyme catalyses (+)-(R)-germacrene A + 3 reduced [NADPH--hemoprotein reductase] + 3 O2 = germacra-1(10),4,11(13)-trien-12-oate + 3 oxidized [NADPH--hemoprotein reductase] + 4 H2O + 4 H(+). Its pathway is secondary metabolite biosynthesis; terpenoid biosynthesis. Its function is as follows. Involved in the biosynthesis of germacrene-derived sesquiterpene lactones. Catalyzes three consecutive oxidations of germacrene A to produce germacrene A acid. Could also catalyze the three-step oxidation of non-natural substrate amorphadiene to artemisinic acid. The protein is Germacrene A hydroxylase of Lactuca sativa (Garden lettuce).